The chain runs to 63 residues: MAMCELCGKKPMFGHNVSHSNRKTNRKFKPNVQRVTVILNGVPKRMRICTRCLRTLYKEAREA.

The protein belongs to the bacterial ribosomal protein bL28 family.

This Thermomicrobium roseum (strain ATCC 27502 / DSM 5159 / P-2) protein is Large ribosomal subunit protein bL28.